Consider the following 620-residue polypeptide: Glutathione-regulated potassium-efflux system protein KefC (620 aa).

12 consecutive transmembrane segments (helical) span residues 4–24, 26–46, 54–74, 90–110, 114–134, 149–169, 178–198, 218–238, 270–290, 294–314, 327–347, and 359–379; these read HTLI…PIAV, LGLG…PWGL, SILH…GLEL, GALQ…LLGL, VAEL…MQAM, FAVL…IPLL, MGAF…VVLL, VFSA…EEVG, GLLL…GTLL, LRIV…LWLI, WFAV…GAAQ, and SLTL…VILN. Residues 399-518 form the RCK N-terminal domain; it reads QPRVIIAGFG…AGVEKPERET (120 aa). Residues 597-620 form a disordered region; sequence GWQGTEEGKHTGNMADEPETKPSS.

It belongs to the monovalent cation:proton antiporter 2 (CPA2) transporter (TC 2.A.37) family. KefC subfamily. Homodimer. Interacts with the regulatory subunit KefF.

It is found in the cell inner membrane. Functionally, pore-forming subunit of a potassium efflux system that confers protection against electrophiles. Catalyzes K(+)/H(+) antiport. This is Glutathione-regulated potassium-efflux system protein KefC from Escherichia coli O127:H6 (strain E2348/69 / EPEC).